The primary structure comprises 230 residues: Uracil-DNA glycosylase (230 aa).

Asp-71 functions as the Proton acceptor in the catalytic mechanism.

Belongs to the uracil-DNA glycosylase (UDG) superfamily. UNG family.

The protein resides in the cytoplasm. The catalysed reaction is Hydrolyzes single-stranded DNA or mismatched double-stranded DNA and polynucleotides, releasing free uracil.. In terms of biological role, excises uracil residues from the DNA which can arise as a result of misincorporation of dUMP residues by DNA polymerase or due to deamination of cytosine. This Tropheryma whipplei (strain TW08/27) (Whipple's bacillus) protein is Uracil-DNA glycosylase.